A 228-amino-acid chain; its full sequence is Rab-like protein 2A (228 aa).

Residues 28-35, 76-80, and 133-136 contribute to the GTP site; these read GDSAVGKS, DTAGQ, and NKID. Positions 200–228 are disordered; the sequence is LEQEEEDVPDQEQSSSIETPSEEVASPHS.

Belongs to the small GTPase superfamily. Rab family. Interacts with IFT27, IFT81, IFT172, ATP6V1E1, HK1, LDHC, MAPRE1 and HSPA2. As to expression, expressed in the testis.

Plays an essential role in male fertility, sperm intra-flagellar transport, and tail assembly. Binds, in a GTP-regulated manner, to a specific set of effector proteins including key proteins involved in cilia development and function and delivers them into the growing sperm tail. The chain is Rab-like protein 2A (RABL2A) from Homo sapiens (Human).